The primary structure comprises 322 residues: Aspartate--ammonia ligase (322 aa).

Belongs to the class-II aminoacyl-tRNA synthetase family. AsnA subfamily.

The protein resides in the cytoplasm. The enzyme catalyses L-aspartate + NH4(+) + ATP = L-asparagine + AMP + diphosphate + H(+). It participates in amino-acid biosynthesis; L-asparagine biosynthesis; L-asparagine from L-aspartate (ammonia route): step 1/1. This is Aspartate--ammonia ligase from Lactiplantibacillus plantarum (strain ATCC BAA-793 / NCIMB 8826 / WCFS1) (Lactobacillus plantarum).